Here is a 247-residue protein sequence, read N- to C-terminus: uncharacterized protein (247 aa).

The N-acetyltransferase domain maps to 102 to 247 (RSIMSRTNDN…ISEHHYRIKR (146 aa)).

This sequence belongs to the acetyltransferase family.

This is an uncharacterized protein from Bacillus subtilis (strain 168).